Reading from the N-terminus, the 456-residue chain is tRNA modification GTPase MnmE (456 aa).

Residues R24, E81, and K120 each contribute to the (6S)-5-formyl-5,6,7,8-tetrahydrofolate site. A TrmE-type G domain is found at 216 to 379 (GMTVVIAGRP…LREHLKACMG (164 aa)). N226 contributes to the K(+) binding site. GTP contacts are provided by residues 226–231 (NAGKSS), 245–251 (TEIAGTT), 270–273 (DTAG), 335–338 (NKAD), and 359–361 (SAR). S230 serves as a coordination point for Mg(2+). K(+) contacts are provided by T245, I247, and T250. T251 contacts Mg(2+). K456 serves as a coordination point for (6S)-5-formyl-5,6,7,8-tetrahydrofolate.

Belongs to the TRAFAC class TrmE-Era-EngA-EngB-Septin-like GTPase superfamily. TrmE GTPase family. In terms of assembly, homodimer. Heterotetramer of two MnmE and two MnmG subunits. The cofactor is K(+).

The protein resides in the cytoplasm. In terms of biological role, exhibits a very high intrinsic GTPase hydrolysis rate. Involved in the addition of a carboxymethylaminomethyl (cmnm) group at the wobble position (U34) of certain tRNAs, forming tRNA-cmnm(5)s(2)U34. The sequence is that of tRNA modification GTPase MnmE from Pseudomonas savastanoi pv. phaseolicola (strain 1448A / Race 6) (Pseudomonas syringae pv. phaseolicola (strain 1448A / Race 6)).